A 268-amino-acid chain; its full sequence is Phosphatidylglycerol--prolipoprotein diacylglyceryl transferase (268 aa).

3 consecutive transmembrane segments (helical) span residues 25–45 (WYGV…TKVF), 57–77 (YLFY…HCFF), and 93–113 (VWHG…AVYF). A 1,2-diacyl-sn-glycero-3-phospho-(1'-sn-glycerol) is bound at residue Arg-142. The next 4 helical transmembrane spans lie at 151 to 171 (IIGI…DLLP), 175 to 195 (VQLY…LAYW), 204 to 224 (GLLL…LEFF), and 236 to 256 (PLSV…LLIF).

Belongs to the Lgt family.

It is found in the cell inner membrane. It carries out the reaction L-cysteinyl-[prolipoprotein] + a 1,2-diacyl-sn-glycero-3-phospho-(1'-sn-glycerol) = an S-1,2-diacyl-sn-glyceryl-L-cysteinyl-[prolipoprotein] + sn-glycerol 1-phosphate + H(+). It functions in the pathway protein modification; lipoprotein biosynthesis (diacylglyceryl transfer). Functionally, catalyzes the transfer of the diacylglyceryl group from phosphatidylglycerol to the sulfhydryl group of the N-terminal cysteine of a prolipoprotein, the first step in the formation of mature lipoproteins. The chain is Phosphatidylglycerol--prolipoprotein diacylglyceryl transferase from Chloroherpeton thalassium (strain ATCC 35110 / GB-78).